The primary structure comprises 176 residues: Large ribosomal subunit protein uL10 (176 aa).

The protein belongs to the universal ribosomal protein uL10 family. Part of the ribosomal stalk of the 50S ribosomal subunit. The N-terminus interacts with L11 and the large rRNA to form the base of the stalk. The C-terminus forms an elongated spine to which L12 dimers bind in a sequential fashion forming a multimeric L10(L12)X complex.

Functionally, forms part of the ribosomal stalk, playing a central role in the interaction of the ribosome with GTP-bound translation factors. This is Large ribosomal subunit protein uL10 from Streptomyces avermitilis (strain ATCC 31267 / DSM 46492 / JCM 5070 / NBRC 14893 / NCIMB 12804 / NRRL 8165 / MA-4680).